Here is an 884-residue protein sequence, read N- to C-terminus: Protein argonaute-4 (884 aa).

The PAZ domain occupies 242-361 (PVIEFMCEVL…LPLEVCNIVA (120 aa)). A Piwi domain is found at 532–843 (LIVVILPGKT…VAFRARYHLV (312 aa)). Residues 848-870 (DSAEGSHVSGQSNGRDPQALAKA) form a disordered region.

This sequence belongs to the argonaute family. Ago subfamily.

The protein localises to the cytoplasm. It localises to the P-body. Required for RNA-mediated gene silencing (RNAi). Binds to short RNAs such as microRNAs (miRNAs) and represses the translation of mRNAs which are complementary to them. Lacks endonuclease activity and does not appear to cleave target mRNAs. In Xenopus laevis (African clawed frog), this protein is Protein argonaute-4 (ago4).